Consider the following 217-residue polypeptide: Octanoyltransferase (217 aa).

One can recognise a BPL/LPL catalytic domain in the interval 33-208; it reads SSSQDEIWLV…KLCSLLGIAS (176 aa). Substrate contacts are provided by residues 72-79, 139-141, and 152-154; these read RGGQVTYH, SIG, and GLA. Residue Cys-170 is the Acyl-thioester intermediate of the active site.

The protein belongs to the LipB family.

It localises to the cytoplasm. It carries out the reaction octanoyl-[ACP] + L-lysyl-[protein] = N(6)-octanoyl-L-lysyl-[protein] + holo-[ACP] + H(+). It participates in protein modification; protein lipoylation via endogenous pathway; protein N(6)-(lipoyl)lysine from octanoyl-[acyl-carrier-protein]: step 1/2. Functionally, catalyzes the transfer of endogenously produced octanoic acid from octanoyl-acyl-carrier-protein onto the lipoyl domains of lipoate-dependent enzymes. Lipoyl-ACP can also act as a substrate although octanoyl-ACP is likely to be the physiological substrate. This is Octanoyltransferase from Pseudoalteromonas atlantica (strain T6c / ATCC BAA-1087).